Reading from the N-terminus, the 459-residue chain is 4,4'-diaponeurosporen-aldehyde dehydrogenase (459 aa).

NAD(+) is bound by residues 114–115 and 188–189; these read FN and GS. Catalysis depends on Glu210, which acts as the Proton acceptor. Met211 contributes to the NAD(+) binding site. The active-site Nucleophile is the Cys244. Residue Glu336 participates in NAD(+) binding.

The protein belongs to the aldehyde dehydrogenase family.

It catalyses the reaction 4,4'-diaponeurosporenal + NAD(+) + H2O = 4,4'-diaponeurosporenoate + NADH + 2 H(+). Its pathway is carotenoid biosynthesis; staphyloxanthin biosynthesis; staphyloxanthin from farnesyl diphosphate. In terms of biological role, involved in the biosynthesis of the yellow-orange carotenoid staphyloxanthin, which plays a role in the virulence via its protective function against oxidative stress. Catalyzes the oxidation of 4,4'-diaponeurosporen-4-al to yield 4,4'-diaponeurosporenoic acid. In Staphylococcus aureus (strain NCTC 8325 / PS 47), this protein is 4,4'-diaponeurosporen-aldehyde dehydrogenase.